A 341-amino-acid polypeptide reads, in one-letter code: MRYLITGTAGFIGFHVAKRLIDEGHFVVGFDGMTPYYDVTLKERRHAILQRSNGFKAVTAMLEDRAALDRAAELAEPEVIIHLAAQAGVRYSLENPKAYVDANLVGSWNMLELAKAIAPKHLMLASTSSIYGANEKIPFAEADRADEPMTLYAATKKSMELMAHSYAHLYKVPTTSFRFFTVYGPWGRPDMALFKFVDAIHNGRPIDIYGEGRMSRDFTYIDDLVESIVRLSHVPPSEENRVAPEKATDTLSRHAPFRVVNTGGGQPVELMTFVETVEKAVGRPAIHNMLPMQQGDVPRTFASPDLLEALTGFKPSVSVEEGVARFVEWYDQNYRRAHTTV.

The Proton acceptor role is filled by Y152.

This sequence belongs to the NAD(P)-dependent epimerase/dehydratase family. Requires NAD(+) as cofactor.

The enzyme catalyses UDP-alpha-D-glucuronate = UDP-alpha-D-galacturonate. The protein is Probable UDP-glucuronate 4-epimerase of Rhizobium meliloti (strain 1021) (Ensifer meliloti).